The primary structure comprises 347 residues: Putative ORC1-type DNA replication protein 1 (347 aa).

ATP is bound by residues 34 to 38 (TGKTV), tyrosine 167, and arginine 179.

The protein belongs to the CDC6/cdc18 family.

In terms of biological role, involved in regulation of DNA replication. Has no effect on MCM helicase activity, either stimulatory or inhibitory. Does not bind DNA. In Thermoplasma acidophilum (strain ATCC 25905 / DSM 1728 / JCM 9062 / NBRC 15155 / AMRC-C165), this protein is Putative ORC1-type DNA replication protein 1 (cdc6-1).